Reading from the N-terminus, the 156-residue chain is Protein CURVATURE THYLAKOID 1C, chloroplastic (156 aa).

The N-terminal 55 residues, 1-55 (MASISATLPSPLLLTQRKSNLTSIQKLPFSLTRGTNDLSPLSLTRNPSSISLMVK), are a transit peptide targeting the chloroplast. At 56–83 (ASGESSDSSTDLDVVSTIQNVWDKSEDR) the chain is on the stromal side. Residues 84-104 (LGLIGLGFAGIVALWASLNLI) form a helical membrane-spanning segment. Topologically, residues 105–109 (TAIDK) are lumenal. The chain crosses the membrane as a helical span at residues 110–130 (LPVISSGFELVGILFSTWFTY). Residues 131-156 (RYLLFKPDRQELSKIVKKSVADILGQ) lie on the Stromal side of the membrane.

The protein belongs to the CURT family. In terms of assembly, homo- and heterodimers and trimers. Interacts with PSAD2.

It localises to the plastid. The protein resides in the chloroplast thylakoid membrane. Its function is as follows. Determines thylakoid architecture by inducing membrane curvature. This chain is Protein CURVATURE THYLAKOID 1C, chloroplastic (CURT1C), found in Arabidopsis thaliana (Mouse-ear cress).